An 86-amino-acid chain; its full sequence is Small ribosomal subunit protein bS16 (86 aa).

It belongs to the bacterial ribosomal protein bS16 family.

The polypeptide is Small ribosomal subunit protein bS16 (Methylibium petroleiphilum (strain ATCC BAA-1232 / LMG 22953 / PM1)).